Here is a 314-residue protein sequence, read N- to C-terminus: Homeobox protein DBX1-A (314 aa).

A DNA-binding region (homeobox) is located at residues 175–234; sequence GMLRRAVFSDVQRKALEKMFQKQKYISKPDRKKLAAKLGLKDSQVKIWFQNRRMKWRNSK. Disordered regions lie at residues 234–279 and 292–314; these read KERE…CAPS and STDSSITFKHSDFSESEDEITVS. The segment covering 258-267 has biased composition (basic and acidic residues); that stretch reads DLSDVGKKSS. Acidic residues predominate over residues 305–314; that stretch reads SESEDEITVS.

This sequence belongs to the H2.0 homeobox family.

The protein localises to the nucleus. The protein is Homeobox protein DBX1-A (dbx1a) of Danio rerio (Zebrafish).